The chain runs to 455 residues: Transcriptional regulatory protein FlbD (455 aa).

Residues 2 to 114 (RLLVVGKLNG…LIAAVLAAVT (113 aa)) form the Response regulatory domain. Positions 120–349 (MVVRDPAMEQ…LENAMHRAVL (230 aa)) constitute a Sigma-54 factor interaction domain. Residues 148 to 155 (GESGSGKE) and 211 to 220 (ADGGTLLLDE) contribute to the ATP site. A DNA-binding region (H-T-H motif) is located at residues 416–435 (RTHAANILGISIRTLRNKLK).

It is found in the cytoplasm. Activation of sigma-54-dependent flagellar gene promoters and strong negative autoregulatory effects on its own promoter. The synthesis and function of FlbD in C.crescentus is controlled by an internal cell-cycle clock. This Caulobacter vibrioides (strain ATCC 19089 / CIP 103742 / CB 15) (Caulobacter crescentus) protein is Transcriptional regulatory protein FlbD (flbD).